Reading from the N-terminus, the 511-residue chain is Vesicular acetylcholine transporter (511 aa).

At Met1–Lys36 the chain is on the cytoplasmic side. Residues Ile37 to Val57 traverse the membrane as a helical segment. The Lumenal, vesicle portion of the chain corresponds to Pro58–Gly108. 3 N-linked (GlcNAc...) asparagine glycosylation sites follow: Asn80, Asn83, and Asn88. The helical transmembrane segment at Val109–Ile129 threads the bilayer. Topologically, residues Asp130–Asp135 are cytoplasmic. The helical transmembrane segment at Ile136–Glu156 threads the bilayer. The Lumenal, vesicle segment spans residues Ser157–Arg165. A helical membrane pass occupies residues Ser166–Lys186. Residues Tyr187–Leu197 lie on the Cytoplasmic side of the membrane. The helical transmembrane segment at Gly198–Leu218 threads the bilayer. Residues Tyr219–Trp225 are Lumenal, vesicle-facing. Residues Val226–Val246 form a helical membrane-spanning segment. The Cytoplasmic segment spans residues Thr247–Met267. A helical transmembrane segment spans residues Ile268–Phe288. The Lumenal, vesicle portion of the chain corresponds to Leu289–Trp306. A glycan (N-linked (GlcNAc...) asparagine) is linked at Asn302. A helical transmembrane segment spans residues Gln307–Val327. At Lys328–Gln337 the chain is on the cytoplasmic side. A helical membrane pass occupies residues Trp338–Cys358. At Arg359–Glu363 the chain is on the lumenal, vesicle side. A helical membrane pass occupies residues Leu364–Pro384. The Cytoplasmic portion of the chain corresponds to Thr385–Ser400. The helical transmembrane segment at Val401–Gly421 threads the bilayer. Topologically, residues Gln422–Gly428 are lumenal, vesicle. Residues Phe429–Phe449 traverse the membrane as a helical segment. The Cytoplasmic portion of the chain corresponds to Leu450 to Glu511. Positions Ala486–Glu511 are disordered.

The protein belongs to the major facilitator superfamily. Vesicular transporter family. High expression in the electric lobe of the brain.

It is found in the membrane. In terms of biological role, involved in acetylcholine transport into synaptic vesicles. This is Vesicular acetylcholine transporter from Torpedo torpedo (Common torpedo).